The following is a 480-amino-acid chain: Endo-1,6-beta-D-glucanase (480 aa).

A signal peptide spans 1–17 (MYPPALTLLLTPGLVAA). Asn-50 carries N-linked (GlcNAc...) asparagine glycosylation. Catalysis depends on Glu-225, which acts as the Proton donor. Residue Glu-321 is the Nucleophile of the active site.

Belongs to the glycosyl hydrolase 30 family.

Its subcellular location is the secreted. The catalysed reaction is Random hydrolysis of (1-&gt;6)-linkages in (1-&gt;6)-beta-D-glucans.. Partially degrades N.crassa cell wall beta-D-glucan, liberating small amounts of oligosaccharides. In Neurospora crassa (strain ATCC 24698 / 74-OR23-1A / CBS 708.71 / DSM 1257 / FGSC 987), this protein is Endo-1,6-beta-D-glucanase (neg-1).